The primary structure comprises 954 residues: Endoplasmic reticulum aminopeptidase 2 (954 aa).

At 1–7 (MANSCRK) the chain is on the cytoplasmic side. A helical; Signal-anchor for type II membrane protein membrane pass occupies residues 8-28 (LIFNIYVVFYCSAVIMPQICI). At 29–954 (CSQFTSSPID…TLRKWLLTSI (926 aa)) the chain is on the lumenal side. 2 N-linked (GlcNAc...) asparagine glycosylation sites follow: Asn-79 and Asn-113. Substrate contacts are provided by residues Glu-194 and 328–332 (GAMEN). Zn(2+) is bound at residue His-364. Glu-365 (proton acceptor) is an active-site residue. Zn(2+)-binding residues include His-368 and Glu-387. N-linked (GlcNAc...) asparagine glycosylation occurs at Asn-399. Cys-415 and Cys-454 are disulfide-bonded. Asn-644 carries an N-linked (GlcNAc...) asparagine glycan. The cysteines at positions 753 and 760 are disulfide-linked.

It belongs to the peptidase M1 family. In terms of assembly, heterodimer with ERAP1. Zn(2+) serves as cofactor. In terms of processing, N-glycosylated.

It localises to the endoplasmic reticulum membrane. Functionally, aminopeptidase that plays a central role in peptide trimming, a step required for the generation of most HLA class I-binding peptides. Peptide trimming is essential to customize longer precursor peptides to fit them to the correct length required for presentation on MHC class I molecules. Preferentially hydrolyzes the basic residues Arg and Lys. This Bos taurus (Bovine) protein is Endoplasmic reticulum aminopeptidase 2 (ERAP2).